We begin with the raw amino-acid sequence, 57 residues long: Large ribosomal subunit protein bL32 (57 aa).

The segment covering 1 to 19 has biased composition (basic residues); it reads MAVPKRRKSRSNTRSRRSQ. Positions 1-22 are disordered; the sequence is MAVPKRRKSRSNTRSRRSQWKA.

This sequence belongs to the bacterial ribosomal protein bL32 family.

The polypeptide is Large ribosomal subunit protein bL32 (Mycobacterium tuberculosis (strain ATCC 25177 / H37Ra)).